We begin with the raw amino-acid sequence, 147 residues long: Cyanate hydratase (147 aa).

Catalysis depends on residues arginine 88, glutamate 91, and serine 114.

Belongs to the cyanase family.

The catalysed reaction is cyanate + hydrogencarbonate + 3 H(+) = NH4(+) + 2 CO2. Catalyzes the reaction of cyanate with bicarbonate to produce ammonia and carbon dioxide. The polypeptide is Cyanate hydratase (Polaromonas sp. (strain JS666 / ATCC BAA-500)).